The following is an 844-amino-acid chain: Protein translocase subunit SecA (844 aa).

Residues Gln-89, 107–111 (GEGKT), and Asp-497 each bind ATP. The Zn(2+) site is built by Cys-829, Cys-831, Cys-840, and His-841.

The protein belongs to the SecA family. As to quaternary structure, monomer and homodimer. Part of the essential Sec protein translocation apparatus which comprises SecA, SecYEG and auxiliary proteins SecDF. Other proteins may also be involved. The cofactor is Zn(2+).

The protein localises to the cell membrane. It is found in the cytoplasm. It catalyses the reaction ATP + H2O + cellular proteinSide 1 = ADP + phosphate + cellular proteinSide 2.. Its function is as follows. Part of the Sec protein translocase complex. Interacts with the SecYEG preprotein conducting channel. Has a central role in coupling the hydrolysis of ATP to the transfer of proteins into and across the cell membrane, serving as an ATP-driven molecular motor driving the stepwise translocation of polypeptide chains across the membrane. The chain is Protein translocase subunit SecA from Streptococcus suis (strain 98HAH33).